We begin with the raw amino-acid sequence, 116 residues long: Large ribosomal subunit protein bL19 (116 aa).

It belongs to the bacterial ribosomal protein bL19 family.

Functionally, this protein is located at the 30S-50S ribosomal subunit interface and may play a role in the structure and function of the aminoacyl-tRNA binding site. This Staphylococcus aureus (strain USA300) protein is Large ribosomal subunit protein bL19.